Reading from the N-terminus, the 176-residue chain is NAD(P)H-quinone oxidoreductase subunit 6, chloroplastic (176 aa).

Transmembrane regions (helical) follow at residues 10-30 (FLLV…VLFP), 32-52 (PIFS…LYIL), 61-81 (AQLL…VMFM), 95-115 (VGDG…ISTI), and 152-172 (FFLP…GAIS).

This sequence belongs to the complex I subunit 6 family. As to quaternary structure, NDH is composed of at least 16 different subunits, 5 of which are encoded in the nucleus.

Its subcellular location is the plastid. The protein resides in the chloroplast thylakoid membrane. The enzyme catalyses a plastoquinone + NADH + (n+1) H(+)(in) = a plastoquinol + NAD(+) + n H(+)(out). It catalyses the reaction a plastoquinone + NADPH + (n+1) H(+)(in) = a plastoquinol + NADP(+) + n H(+)(out). Functionally, NDH shuttles electrons from NAD(P)H:plastoquinone, via FMN and iron-sulfur (Fe-S) centers, to quinones in the photosynthetic chain and possibly in a chloroplast respiratory chain. The immediate electron acceptor for the enzyme in this species is believed to be plastoquinone. Couples the redox reaction to proton translocation, and thus conserves the redox energy in a proton gradient. The chain is NAD(P)H-quinone oxidoreductase subunit 6, chloroplastic (ndhG) from Aethionema cordifolium (Lebanon stonecress).